Consider the following 892-residue polypeptide: Major core protein OPG136 precursor (892 aa).

Residues 616-698 (SPEGEETIIC…ILDRIITNAG (83 aa)) constitute a propeptide that is removed on maturation.

The protein belongs to the orthopxvirus protein OPG136 family. In terms of assembly, interacts with P39/A4. In terms of processing, the precursor is cleaved by OPG083 to give rise to the 62 kDa mature protein during virion maturation. Proteolytic cleavage of major core proteins OPG136, OPG129, and OPG098, which occurs at a late stage of core formation, is required for production of infectious mature virions (MV).

The protein resides in the virion. In terms of biological role, core protein 4a is the most abundant virion protein. Major component of the virion core that undergoes proteolytic processing during the immature virion (IV) to mature virion (MV) transition. The protein is Major core protein OPG136 precursor (OPG136) of Homo sapiens (Human).